Reading from the N-terminus, the 1988-residue chain is Sodium channel protein type 9 subunit alpha (1988 aa).

Residues Met1 to His125 are Cytoplasmic-facing. Residues Arg26–Lys39 are compositionally biased toward basic and acidic residues. The segment at Arg26–Ala55 is disordered. The stretch at Phe112–Gln410 is one I repeat. Residues Ser126–Met145 traverse the membrane as a helical segment. Residues Asn146–Asp150 lie on the Extracellular side of the membrane. The chain crosses the membrane as a helical span at residues Trp151–Leu172. At Ala173 to Arg185 the chain is on the cytoplasmic side. Residues Asp186 to Phe204 traverse the membrane as a helical segment. Residues Val205–Val210 are Extracellular-facing. N-linked (GlcNAc...) asparagine glycosylation occurs at Asn209. A helical transmembrane segment spans residues Ser211 to Val227. Topologically, residues Ile228–Ser241 are cytoplasmic. A helical membrane pass occupies residues Val242–Phe267. Over Met268 to Thr346 the chain is Extracellular. Cysteines 275 and 324 form a disulfide. N-linked (GlcNAc...) asparagine glycosylation occurs at Asn283. The segment at residues Phe347–Trp363 is an intramembrane region (pore-forming). The Extracellular portion of the chain corresponds to Glu364–Lys376. The helical transmembrane segment at Thr377–Ala402 threads the bilayer. Residues Met403 to Phe745 lie on the Cytoplasmic side of the membrane. A compositionally biased stretch (low complexity) spans Ser461–Lys471. Disordered regions lie at residues Ser461 to Leu543 and Gly565 to Met611. Basic residues predominate over residues Lys474–Lys486. 2 stretches are compositionally biased toward basic and acidic residues: residues Ser489–Arg510 and Asp573–Arg585. Residues Cys726–Gln989 form an II repeat. Residues Val746–Ala762 traverse the membrane as a helical segment. Topologically, residues Met763 to Glu771 are extracellular. The chain crosses the membrane as a helical span at residues Phe772–Ile796. At Ala797–Gln805 the chain is on the cytoplasmic side. The chain crosses the membrane as a helical span at residues Val806–Glu822. Topologically, residues Leu823–Leu831 are extracellular. A helical membrane pass occupies residues Ser832–Ser848. The Cytoplasmic portion of the chain corresponds to Trp849 to Ala865. A helical transmembrane segment spans residues Leu866–Phe888. At Gly889–His915 the chain is on the extracellular side. Cys897 and Cys903 are oxidised to a cystine. The segment at residues Ser916–Trp928 is an intramembrane region (pore-forming). The Extracellular segment spans residues Ile929–Gly940. Cys935 and Cys944 are oxidised to a cystine. Residues Gln941–Leu967 traverse the membrane as a helical segment. Residues Leu968 to Lys1187 are Cytoplasmic-facing. The tract at residues Asn1102 to Ser1148 is disordered. Residues Asn1120–Asp1131 are compositionally biased toward polar residues. Residues Glu1137 to Ser1148 show a composition bias toward acidic residues. Residues Asn1180 to Leu1488 form an III repeat. The helical transmembrane segment at Ile1188–Glu1212 threads the bilayer. Residues Asp1213 to Ile1224 are Extracellular-facing. The chain crosses the membrane as a helical span at residues Ile1225–Tyr1250. The Cytoplasmic segment spans residues Lys1251–Thr1252. A helical membrane pass occupies residues Tyr1253–Leu1278. The Extracellular portion of the chain corresponds to Gly1279–Lys1287. Residues Ser1288–Phe1304 traverse the membrane as a helical segment. At Glu1305–Ala1317 the chain is on the cytoplasmic side. The chain crosses the membrane as a helical span at residues Ile1318 to Leu1342. The Extracellular segment spans residues Phe1343–Leu1394. Residues Cys1350 and Cys1370 are joined by a disulfide bond. Asn1352, Asn1366, and Asn1375 each carry an N-linked (GlcNAc...) asparagine glycan. Residues Gly1395 to Phe1405 constitute an intramembrane region (pore-forming). Residues Lys1406–Leu1431 lie on the Extracellular side of the membrane. A helical membrane pass occupies residues Tyr1432–Ile1457. The Cytoplasmic segment spans residues Asp1458–Asn1514. Phosphoserine; by PKC is present on Ser1490. The stretch at Ile1497–Gln1795 is one IV repeat. Residues Gln1515–Val1534 traverse the membrane as a helical segment. Over Glu1535–Glu1545 the chain is Extracellular. The helical transmembrane segment at Val1546–Ile1567 threads the bilayer. The Cytoplasmic segment spans residues Ser1568–Val1576. Residues Gly1577–Leu1598 form a helical membrane-spanning segment. Over Ile1599–Thr1607 the chain is Extracellular. A helical membrane pass occupies residues Leu1608–Ala1627. At Lys1628 to Ser1640 the chain is on the cytoplasmic side. A helical transmembrane segment spans residues Leu1641–Met1663. Residues Ser1664–Asn1686 lie on the Extracellular side of the membrane. Positions Ser1687–Gly1699 form an intramembrane region, pore-forming. Residues Trp1700 to Pro1733 are Extracellular-facing. A disulfide bridge links Cys1715 with Cys1730. A helical membrane pass occupies residues Ser1734–Ile1759. Residues Leu1760–Lys1988 are Cytoplasmic-facing. The IQ domain maps to Glu1889–Lys1918. The interval Phe1934–Lys1988 is disordered. Positions Ala1948–Val1961 are enriched in low complexity. A compositionally biased stretch (basic and acidic residues) spans Thr1962–Lys1988.

The protein belongs to the sodium channel (TC 1.A.1.10) family. Nav1.7/SCN9A subfamily. The Nav1.7 voltage-gated sodium channel consists of an ion-conducting alpha subunit SCN9A which is functional on its own regulated by one or more beta-1 (SCN1B), beta-2 (SCN2B), beta-3 (SCN3B) and beta-4 (SCN4B) subunits. SCN1B and SCN3B are non-covalently associated with SCN9A. SCN2B and SCN4B are disulfide-linked to SCN9A. SCN1B regulates channel inactivation. Interacts with NEDD4 and NEDD4L; regulates Nav1.7 activity most probably through ubiquitination and subsequent endocytosis. Interacts with TMEM233; modulates the gating properties of NaV1.7. In terms of processing, phosphorylation at Ser-1490 by PKC in a highly conserved cytoplasmic loop increases peak sodium currents. Post-translationally, ubiquitinated by NEDD4L; which may promote its endocytosis. As to expression, expressed strongly in dorsal root ganglion, with only minor levels elsewhere in the body, smooth muscle cells, MTC cell line and C-cell carcinoma. Also expressed in vagus nerves within the head and neck region. Isoform 1 is expressed preferentially in the central and peripheral nervous system. Isoform 2 is expressed preferentially in the dorsal root ganglion.

It is found in the cell membrane. The protein resides in the cell projection. Its subcellular location is the neuron projection. The protein localises to the axon. It carries out the reaction Na(+)(in) = Na(+)(out). Its activity is regulated as follows. Inhibited by tetrodotoxin. Weakly inhibited by saxitoxin. Inhibited by the spider huwentoxin-IV that binds the extracellular loop S3-S4 of repeat II. Inhibited by the spider protoxin-II that binds the extracellular loop S3-S4 of repeats II and IV. Inhibited by the scorpion alpha-toxins CvIV4 and AaH2. Inhibited by the conotoxin GVIIJ. Inhibited by the spider beta/delta-theraphotoxin-Pre1a. Functionally, pore-forming subunit of Nav1.7, a voltage-gated sodium (Nav) channel that directly mediates the depolarizing phase of action potentials in excitable membranes. Navs, also called VGSCs (voltage-gated sodium channels) or VDSCs (voltage-dependent sodium channels), operate by switching between closed and open conformations depending on the voltage difference across the membrane. In the open conformation they allow Na(+) ions to selectively pass through the pore, along their electrochemical gradient. The influx of Na(+) ions provokes membrane depolarization, initiating the propagation of electrical signals throughout cells and tissues. Nav1.7 plays a crucial role in controlling the excitability and action potential propagation from nociceptor neurons, thereby contributing to the sensory perception of pain. The polypeptide is Sodium channel protein type 9 subunit alpha (Homo sapiens (Human)).